Consider the following 239-residue polypeptide: Ribitol-5-phosphate cytidylyltransferase (239 aa).

CTP contacts are provided by residues Phe-7 to Gly-10 and Gly-80 to Ser-86.

This sequence belongs to the IspD/TarI cytidylyltransferase family. TarI subfamily.

It catalyses the reaction D-ribitol 5-phosphate + CTP + H(+) = CDP-L-ribitol + diphosphate. The protein operates within cell wall biogenesis; poly(ribitol phosphate) teichoic acid biosynthesis. Functionally, catalyzes the transfer of the cytidylyl group of CTP to D-ribitol 5-phosphate. The protein is Ribitol-5-phosphate cytidylyltransferase of Streptococcus agalactiae serotype Ia (strain ATCC 27591 / A909 / CDC SS700).